The following is a 405-amino-acid chain: Eukaryotic initiation factor 4A (405 aa).

The Q motif motif lies at Pro32–Gln60. One can recognise a Helicase ATP-binding domain in the interval Ile63–Ile233. Ala76 to Thr83 contributes to the ATP binding site. The DEAD box motif lies at Asp181–Asp184. Residues Gly244–Ile405 form the Helicase C-terminal domain.

It belongs to the DEAD box helicase family. eIF4A subfamily.

It localises to the cytoplasm. The catalysed reaction is ATP + H2O = ADP + phosphate + H(+). ATP-dependent RNA helicase which is a subunit of the eIF4F complex involved in cap recognition and is required for mRNA binding to ribosome. In the current model of translation initiation, eIF4A unwinds RNA secondary structures in the 5'-UTR of mRNAs which is necessary to allow efficient binding of the small ribosomal subunit, and subsequent scanning for the initiator codon. This is Eukaryotic initiation factor 4A (tifA) from Dictyostelium discoideum (Social amoeba).